We begin with the raw amino-acid sequence, 78 residues long: Large ribosomal subunit protein bL28 (78 aa).

The protein belongs to the bacterial ribosomal protein bL28 family.

The sequence is that of Large ribosomal subunit protein bL28 from Clavibacter michiganensis subsp. michiganensis (strain NCPPB 382).